We begin with the raw amino-acid sequence, 340 residues long: Transcription initiation factor IIB (340 aa).

The TFIIB-type zinc finger occupies 16–49 (VKMICSECREDPPNLVEEFSSGDTVCGSCGLVLG). Zn(2+)-binding residues include cysteine 20, cysteine 23, cysteine 41, and cysteine 44. 2 consecutive repeat copies span residues 128–204 (MCDA…TLQR) and 239–315 (FCNR…LLHA).

Belongs to the TFIIB family. As to quaternary structure, associates with TFIID-IIA (DA complex) to form TFIID-IIA-IIB (DAB-complex) which is then recognized by polymerase II.

Its subcellular location is the nucleus. In terms of biological role, general factor that plays a major role in the activation of eukaryotic genes transcribed by RNA polymerase II. This chain is Transcription initiation factor IIB (sua7), found in Schizosaccharomyces pombe (strain 972 / ATCC 24843) (Fission yeast).